Reading from the N-terminus, the 330-residue chain is MTSNLEAQLLALRQEGEQAIAAADTLERLEELRVSYLGKKGQLGALLRSMGQMSAEERPKIGAIANTVKEALQASLDKQRESLESAQIQAQLDAETLDVTMPGIYKPQGRIHPLNGIIDRALDVFVGLGYTVAQGLEMETDYYNFEALNTPPDHPARDMQDTFYLPDGNLLRTHTSSVQIRYMEKEEPPIHIVAPGRVYRRDNVDATHSAVFHQIELLAIDEGLTFTDLKGTIKVFLQAMFGDLPIRFRASYFPFTEPSAEVDLQWNGRWLEVMGCGMVDPNVMKSVGYNPEIYTGFAAGFGVERFAMVLHQIDDIRRLYASDLRFLRQF.

Glu-257 contacts Mg(2+).

It belongs to the class-II aminoacyl-tRNA synthetase family. Phe-tRNA synthetase alpha subunit type 1 subfamily. As to quaternary structure, tetramer of two alpha and two beta subunits. It depends on Mg(2+) as a cofactor.

It localises to the cytoplasm. It catalyses the reaction tRNA(Phe) + L-phenylalanine + ATP = L-phenylalanyl-tRNA(Phe) + AMP + diphosphate + H(+). This is Phenylalanine--tRNA ligase alpha subunit from Nostoc sp. (strain PCC 7120 / SAG 25.82 / UTEX 2576).